Consider the following 198-residue polypeptide: FMN-dependent NADH:quinone oxidoreductase (198 aa).

Residues S10, 16–18, 94–97, and 138–141 each bind FMN; these read SQS, MYNF, and TRGG.

This sequence belongs to the azoreductase type 1 family. In terms of assembly, homodimer. It depends on FMN as a cofactor.

It catalyses the reaction 2 a quinone + NADH + H(+) = 2 a 1,4-benzosemiquinone + NAD(+). The enzyme catalyses N,N-dimethyl-1,4-phenylenediamine + anthranilate + 2 NAD(+) = 2-(4-dimethylaminophenyl)diazenylbenzoate + 2 NADH + 2 H(+). In terms of biological role, quinone reductase that provides resistance to thiol-specific stress caused by electrophilic quinones. Also exhibits azoreductase activity. Catalyzes the reductive cleavage of the azo bond in aromatic azo compounds to the corresponding amines. In Shewanella baltica (strain OS223), this protein is FMN-dependent NADH:quinone oxidoreductase.